The following is a 145-amino-acid chain: Basic phospholipase A2 cPm08 (145 aa).

The N-terminal stretch at 1–21 (MYPAHLLVLLAVCVSLLGASA) is a signal peptide. The propeptide occupies 22-27 (IPPLPL). 7 cysteine pairs are disulfide-bonded: Cys-38–Cys-98, Cys-54–Cys-144, Cys-56–Cys-72, Cys-71–Cys-125, Cys-78–Cys-118, Cys-87–Cys-111, and Cys-105–Cys-116. Ca(2+) is bound by residues Tyr-55, Gly-57, and Gly-59. His-75 is an active-site residue. Asp-76 provides a ligand contact to Ca(2+). Residue Asp-119 is part of the active site.

It belongs to the phospholipase A2 family. Group I subfamily. D49 sub-subfamily. Ca(2+) is required as a cofactor. As to expression, expressed by the venom gland.

Its subcellular location is the secreted. It carries out the reaction a 1,2-diacyl-sn-glycero-3-phosphocholine + H2O = a 1-acyl-sn-glycero-3-phosphocholine + a fatty acid + H(+). Functionally, PLA2 catalyzes the calcium-dependent hydrolysis of the 2-acyl groups in 3-sn-phosphoglycerides. This Laticauda semifasciata (Black-banded sea krait) protein is Basic phospholipase A2 cPm08.